A 468-amino-acid chain; its full sequence is UDP-N-acetylmuramate--L-alanine ligase (468 aa).

114 to 120 (GTHGKTT) is a binding site for ATP.

This sequence belongs to the MurCDEF family.

Its subcellular location is the cytoplasm. It carries out the reaction UDP-N-acetyl-alpha-D-muramate + L-alanine + ATP = UDP-N-acetyl-alpha-D-muramoyl-L-alanine + ADP + phosphate + H(+). The protein operates within cell wall biogenesis; peptidoglycan biosynthesis. Cell wall formation. The polypeptide is UDP-N-acetylmuramate--L-alanine ligase (Methylorubrum extorquens (strain PA1) (Methylobacterium extorquens)).